Consider the following 174-residue polypeptide: Early nodulin-11 (174 aa).

The N-terminal stretch at M1 to A25 is a signal peptide. The disordered stretch occupies residues S28–F174. The segment covering Y53–K65 has biased composition (pro residues). A compositionally biased stretch (low complexity) spans K70–L83. Positions P122–P132 are enriched in basic residues. 2 stretches are compositionally biased toward pro residues: residues N134–K150 and K159–F174.

It belongs to the plant proline-rich protein superfamily. As to expression, expressed in cotyledons, leaf vasculature, stomatal guard cells and trichomes. In the embryo, expressed in embryo suspensors, the epidermis and underlying tissues of the cotyledons, hypocotyls, and radicle in maturing embryos, and the outer cell layer of the endosperm.

It localises to the secreted. The protein localises to the cell wall. Functionally, involved in the infection process during the plant-rhizobium interaction. Involved in actinorhizal root nodulation. Involved in symbiotic association with the nitrogen-fixing actinomycete Frankia spp. This chain is Early nodulin-11, found in Medicago truncatula (Barrel medic).